We begin with the raw amino-acid sequence, 183 residues long: Ribulose bisphosphate carboxylase small subunit, chloroplastic 4 (183 aa).

The N-terminal 57 residues, methionine 1–glutamine 57, are a transit peptide targeting the chloroplast.

It belongs to the RuBisCO small chain family. As to quaternary structure, heterohexadecamer of 8 large and 8 small subunits.

Its subcellular location is the plastid. It is found in the chloroplast. Its function is as follows. RuBisCO catalyzes two reactions: the carboxylation of D-ribulose 1,5-bisphosphate, the primary event in carbon dioxide fixation, as well as the oxidative fragmentation of the pentose substrate. Both reactions occur simultaneously and in competition at the same active site. Although the small subunit is not catalytic it is essential for maximal activity. This chain is Ribulose bisphosphate carboxylase small subunit, chloroplastic 4, found in Mesembryanthemum crystallinum (Common ice plant).